Reading from the N-terminus, the 122-residue chain is MKLRPLYDKIVVERLEEKEEKTPSGIIIPDTAKEKPQLGKVVAVGPGKLLDNGELKPLSVKEGDVVLFNKYAGNEVEIEGKIYLVMSEDEVLAVVEDYSSLIGGEVRWQQRQLSTTRKQGQN.

It belongs to the GroES chaperonin family. Heptamer of 7 subunits arranged in a ring. Interacts with the chaperonin GroEL.

The protein localises to the cytoplasm. In terms of biological role, together with the chaperonin GroEL, plays an essential role in assisting protein folding. The GroEL-GroES system forms a nano-cage that allows encapsulation of the non-native substrate proteins and provides a physical environment optimized to promote and accelerate protein folding. GroES binds to the apical surface of the GroEL ring, thereby capping the opening of the GroEL channel. This chain is Co-chaperonin GroES, found in Aquifex aeolicus (strain VF5).